Here is a 544-residue protein sequence, read N- to C-terminus: Inward rectifier potassium channel irk-1 (544 aa).

At 1–109 the chain is on the cytoplasmic side; the sequence is MTLSVPDCAE…IFTTMIDVKW (109 aa). A helical transmembrane segment spans residues 110 to 134; sequence RWMLMLFASAFVLSWSIFGTTYYLI. The Extracellular segment spans residues 135–158; that stretch reads ALVHGDLSLPTPVNHTACVMNLDS. Positions 159-170 form an intramembrane region, helical; Pore-forming; sequence VYSSFLFAVETH. The segment at residues 171–177 is an intramembrane region (pore-forming); the sequence is HTIGYGH. The Selectivity filter signature appears at 172–177; the sequence is TIGYGH. The Extracellular segment spans residues 178 to 186; that stretch reads RYITTECYL. A helical transmembrane segment spans residues 187-208; the sequence is AGAIVCLQAICALLLQSFMVGI. The Cytoplasmic portion of the chain corresponds to 209–544; it reads VFAKMARPKK…PIHIEIVSET (336 aa). Disordered regions lie at residues 411 to 448 and 512 to 533; these read HKLEDNRSSDSTPLPSPSPYSYPSTPLNHFQSSSNSPV and LSDLEEECSDSGSPTKCQSPPV. Residues 438–448 are compositionally biased toward polar residues; that stretch reads NHFQSSSNSPV.

Belongs to the inward rectifier-type potassium channel (TC 1.A.2.1) family. Expressed in neurons in the head and tail with no expression detected in non-neuronal cells in these regions. Also detected in the egg-laying system of adult hermaphordites with strong expression in the HSN motor neurons and weak expression in vulval muscles.

Its subcellular location is the membrane. It localises to the perikaryon. It is found in the cell projection. In terms of biological role, inward rectifier potassium channels are characterized by a greater tendency to allow potassium to flow into the cell rather than out of it. Required for modulation of the activity of the hermaphrodite-specific neurons (HSNs) by the G-protein coupled neuropeptide receptor egl-6 which in turn controls egg-laying behavior. The chain is Inward rectifier potassium channel irk-1 (irk-1) from Caenorhabditis elegans.